Reading from the N-terminus, the 463-residue chain is D-inositol 3-phosphate glycosyltransferase (463 aa).

H40 is a binding site for 1D-myo-inositol 3-phosphate. Residues 46–47 (QP) and G54 each bind UDP-N-acetyl-alpha-D-glucosamine. Residues 51–56 (DAGGMN), K109, Y142, T166, and R186 each bind 1D-myo-inositol 3-phosphate. UDP-N-acetyl-alpha-D-glucosamine-binding residues include R260, K265, and Q318. Residues F327, H328, and V330 each coordinate Mg(2+). E340 and E348 together coordinate UDP-N-acetyl-alpha-D-glucosamine. T354 lines the Mg(2+) pocket. The tract at residues 443–463 (VRDPVAARKPRRWTARRGVGA) is disordered.

Belongs to the glycosyltransferase group 1 family. MshA subfamily. In terms of assembly, homodimer.

It carries out the reaction 1D-myo-inositol 3-phosphate + UDP-N-acetyl-alpha-D-glucosamine = 1D-myo-inositol 2-acetamido-2-deoxy-alpha-D-glucopyranoside 3-phosphate + UDP + H(+). Functionally, catalyzes the transfer of a N-acetyl-glucosamine moiety to 1D-myo-inositol 3-phosphate to produce 1D-myo-inositol 2-acetamido-2-deoxy-glucopyranoside 3-phosphate in the mycothiol biosynthesis pathway. The sequence is that of D-inositol 3-phosphate glycosyltransferase from Mycobacterium ulcerans (strain Agy99).